We begin with the raw amino-acid sequence, 436 residues long: Histone acetyltransferase type B subunit 2 (436 aa).

The segment covering 1–19 (MEPYDDGFIEEQEEQEEER) has biased composition (acidic residues). Positions 1 to 22 (MEPYDDGFIEEQEEQEEERTEE) are disordered. WD repeat units lie at residues 136 to 176 (DHKG…SLPT), 187 to 227 (GHTK…KGNK), 237 to 277 (HHSS…TTRA), 284 to 324 (QHRD…TKLH), and 328 to 368 (CHTD…EEQT). Residues 370-374 (DDAQD) are interaction with the histone H4 N-terminus. One copy of the WD 6 repeat lies at 385 to 425 (GHTNRISDFSWNLNDPWVLCSAAEDNLLQVWKVADAIVGKD).

This sequence belongs to the WD repeat RBAP46/RBAP48/MSI1 family. As to quaternary structure, component of the HAT-B complex composed of at least hat1 and hat2. The HAT-B complex binds to histone H4 tail.

It localises to the cytoplasm. It is found in the nucleus. Functionally, regulatory subunit of the histone acetylase B (HAT-B) complex. The complex acetylates 'Lys-12' of histone H4 which is required for telomeric silencing. The protein is Histone acetyltransferase type B subunit 2 (hat2) of Aspergillus oryzae (strain ATCC 42149 / RIB 40) (Yellow koji mold).